We begin with the raw amino-acid sequence, 273 residues long: Imidazole glycerol phosphate synthase subunit HisF (273 aa).

Residues Asp-12 and Asp-136 contribute to the active site.

It belongs to the HisA/HisF family. Heterodimer of HisH and HisF.

It localises to the cytoplasm. It catalyses the reaction 5-[(5-phospho-1-deoxy-D-ribulos-1-ylimino)methylamino]-1-(5-phospho-beta-D-ribosyl)imidazole-4-carboxamide + L-glutamine = D-erythro-1-(imidazol-4-yl)glycerol 3-phosphate + 5-amino-1-(5-phospho-beta-D-ribosyl)imidazole-4-carboxamide + L-glutamate + H(+). It functions in the pathway amino-acid biosynthesis; L-histidine biosynthesis; L-histidine from 5-phospho-alpha-D-ribose 1-diphosphate: step 5/9. Its function is as follows. IGPS catalyzes the conversion of PRFAR and glutamine to IGP, AICAR and glutamate. The HisF subunit catalyzes the cyclization activity that produces IGP and AICAR from PRFAR using the ammonia provided by the HisH subunit. This chain is Imidazole glycerol phosphate synthase subunit HisF, found in Halobacterium salinarum (strain ATCC 29341 / DSM 671 / R1).